The sequence spans 646 residues: Lipoteichoic acid synthase (646 aa).

Residues 1–7 lie on the Cytoplasmic side of the membrane; that stretch reads MKLHKKK. A helical membrane pass occupies residues 8 to 28; the sequence is LTLFAFFILTVLTVTLKTYFS. Topologically, residues 29-43 are extracellular; it reads YYVDFSLGVKGLVQN. A helical transmembrane segment spans residues 44–64; sequence LILLMNPYSLIALVLSIFLFF. The Cytoplasmic portion of the chain corresponds to 65-68; the sequence is KGKK. A helical membrane pass occupies residues 69 to 89; the sequence is AFWFIFIGGFILTFLLYANVV. Topologically, residues 90 to 119 are extracellular; it reads YFRFFSDFLTFSTLNQAGNVESMGGAVTAS. Residues 120 to 140 form a helical membrane-spanning segment; sequence FKWYDFVYFIDTIIYLFVLIF. Residues 141 to 153 lie on the Cytoplasmic side of the membrane; sequence KQKWLDKRVFSKK. Residues 154–174 traverse the membrane as a helical segment; it reads FVPVVMAASIALFFLNLAFAE. At 175-646 the chain is on the extracellular side; it reads SDRPELLTRT…KTGPKGQERK (472 aa). Mn(2+)-binding residues include E255 and T300. Residue T300 is part of the active site. H416 provides a ligand contact to substrate. Residues D475 and H476 each contribute to the Mn(2+) site. Residues 579-646 form a disordered region; that stretch reads IYDNKNNEPM…KTGPKGQERK (68 aa). Composition is skewed to basic and acidic residues over residues 580–607 and 625–646; these read YDNK…KDLQ and DFDK…QERK.

Belongs to the LTA synthase family. Post-translationally, proteolytically cleaved.

It is found in the cell membrane. It localises to the secreted. It participates in cell wall biogenesis; lipoteichoic acid biosynthesis. Functionally, catalyzes the polymerization of lipoteichoic acid (LTA) polyglycerol phosphate, a reaction that presumably uses phosphatidylglycerol (PG) as substrate. Is required for staphylococcal growth and cell division process. The polypeptide is Lipoteichoic acid synthase (ltaS) (Staphylococcus saprophyticus subsp. saprophyticus (strain ATCC 15305 / DSM 20229 / NCIMB 8711 / NCTC 7292 / S-41)).